We begin with the raw amino-acid sequence, 345 residues long: Biotin synthase (345 aa).

Positions 38 to 256 (RQVQVSTLLS…IAVARIMMPS (219 aa)) constitute a Radical SAM core domain. [4Fe-4S] cluster-binding residues include Cys-53, Cys-57, and Cys-60. 4 residues coordinate [2Fe-2S] cluster: Cys-97, Cys-128, Cys-188, and Arg-260.

This sequence belongs to the radical SAM superfamily. Biotin synthase family. As to quaternary structure, homodimer. [4Fe-4S] cluster is required as a cofactor. [2Fe-2S] cluster serves as cofactor.

The catalysed reaction is (4R,5S)-dethiobiotin + (sulfur carrier)-SH + 2 reduced [2Fe-2S]-[ferredoxin] + 2 S-adenosyl-L-methionine = (sulfur carrier)-H + biotin + 2 5'-deoxyadenosine + 2 L-methionine + 2 oxidized [2Fe-2S]-[ferredoxin]. Its pathway is cofactor biosynthesis; biotin biosynthesis; biotin from 7,8-diaminononanoate: step 2/2. Functionally, catalyzes the conversion of dethiobiotin (DTB) to biotin by the insertion of a sulfur atom into dethiobiotin via a radical-based mechanism. This Yersinia pseudotuberculosis serotype O:1b (strain IP 31758) protein is Biotin synthase.